An 807-amino-acid chain; its full sequence is Leucine--tRNA ligase (807 aa).

Residues 40 to 51 (PYPSGSGLHVGH) carry the 'HIGH' region motif. Positions 576-580 (KMSKS) match the 'KMSKS' region motif. Residue K579 participates in ATP binding.

Belongs to the class-I aminoacyl-tRNA synthetase family.

Its subcellular location is the cytoplasm. The enzyme catalyses tRNA(Leu) + L-leucine + ATP = L-leucyl-tRNA(Leu) + AMP + diphosphate. In Chlorobaculum parvum (strain DSM 263 / NCIMB 8327) (Chlorobium vibrioforme subsp. thiosulfatophilum), this protein is Leucine--tRNA ligase.